A 61-amino-acid polypeptide reads, in one-letter code: Small ribosomal subunit protein uS14 (61 aa).

The Zn(2+) site is built by C24, C27, C40, and C43.

This sequence belongs to the universal ribosomal protein uS14 family. Zinc-binding uS14 subfamily. In terms of assembly, part of the 30S ribosomal subunit. Contacts proteins S3 and S10. Zn(2+) serves as cofactor.

Functionally, binds 16S rRNA, required for the assembly of 30S particles and may also be responsible for determining the conformation of the 16S rRNA at the A site. The protein is Small ribosomal subunit protein uS14 of Clostridium novyi (strain NT).